Here is a 441-residue protein sequence, read N- to C-terminus: Ribulose bisphosphate carboxylase large chain (441 aa).

K5 bears the N6,N6,N6-trimethyllysine mark. Substrate-binding residues include N114 and T164. K166 serves as the catalytic Proton acceptor. K168 contacts substrate. Mg(2+)-binding residues include K192, D194, and E195. K192 is subject to N6-carboxylysine. H285 serves as the catalytic Proton acceptor. Substrate-binding residues include R286, H318, and S370.

This sequence belongs to the RuBisCO large chain family. Type I subfamily. As to quaternary structure, heterohexadecamer of 8 large chains and 8 small chains; disulfide-linked. The disulfide link is formed within the large subunit homodimers. Mg(2+) serves as cofactor. The disulfide bond which can form in the large chain dimeric partners within the hexadecamer appears to be associated with oxidative stress and protein turnover.

It localises to the plastid. Its subcellular location is the chloroplast. It catalyses the reaction 2 (2R)-3-phosphoglycerate + 2 H(+) = D-ribulose 1,5-bisphosphate + CO2 + H2O. The catalysed reaction is D-ribulose 1,5-bisphosphate + O2 = 2-phosphoglycolate + (2R)-3-phosphoglycerate + 2 H(+). Its function is as follows. RuBisCO catalyzes two reactions: the carboxylation of D-ribulose 1,5-bisphosphate, the primary event in carbon dioxide fixation, as well as the oxidative fragmentation of the pentose substrate in the photorespiration process. Both reactions occur simultaneously and in competition at the same active site. This chain is Ribulose bisphosphate carboxylase large chain, found in Argyrochosma delicatula (Delicate cloak fern).